The following is a 1174-amino-acid chain: DNA-directed RNA polymerase subunit beta' (1174 aa).

Cys-60, Cys-62, Cys-75, and Cys-78 together coordinate Zn(2+). The Mg(2+) site is built by Asp-450, Asp-452, and Asp-454. Cys-795, Cys-869, Cys-876, and Cys-879 together coordinate Zn(2+).

It belongs to the RNA polymerase beta' chain family. The RNAP catalytic core consists of 2 alpha, 1 beta, 1 beta' and 1 omega subunit. When a sigma factor is associated with the core the holoenzyme is formed, which can initiate transcription. Mg(2+) is required as a cofactor. It depends on Zn(2+) as a cofactor.

The catalysed reaction is RNA(n) + a ribonucleoside 5'-triphosphate = RNA(n+1) + diphosphate. Functionally, DNA-dependent RNA polymerase catalyzes the transcription of DNA into RNA using the four ribonucleoside triphosphates as substrates. The sequence is that of DNA-directed RNA polymerase subunit beta' from Clostridium kluyveri (strain ATCC 8527 / DSM 555 / NBRC 12016 / NCIMB 10680 / K1).